Reading from the N-terminus, the 298-residue chain is GTP cyclohydrolase FolE2 (298 aa).

Belongs to the GTP cyclohydrolase IV family.

The catalysed reaction is GTP + H2O = 7,8-dihydroneopterin 3'-triphosphate + formate + H(+). The protein operates within cofactor biosynthesis; 7,8-dihydroneopterin triphosphate biosynthesis; 7,8-dihydroneopterin triphosphate from GTP: step 1/1. Functionally, converts GTP to 7,8-dihydroneopterin triphosphate. The sequence is that of GTP cyclohydrolase FolE2 from Pseudomonas aeruginosa (strain UCBPP-PA14).